Consider the following 425-residue polypeptide: Serine--tRNA ligase (425 aa).

230 to 232 (TAE) contacts L-serine. 261–263 (RAE) lines the ATP pocket. Glutamate 284 provides a ligand contact to L-serine. Residue 348–351 (EISS) coordinates ATP. Residue serine 384 participates in L-serine binding.

The protein belongs to the class-II aminoacyl-tRNA synthetase family. Type-1 seryl-tRNA synthetase subfamily. In terms of assembly, homodimer. The tRNA molecule binds across the dimer.

The protein resides in the cytoplasm. It catalyses the reaction tRNA(Ser) + L-serine + ATP = L-seryl-tRNA(Ser) + AMP + diphosphate + H(+). The enzyme catalyses tRNA(Sec) + L-serine + ATP = L-seryl-tRNA(Sec) + AMP + diphosphate + H(+). Its pathway is aminoacyl-tRNA biosynthesis; selenocysteinyl-tRNA(Sec) biosynthesis; L-seryl-tRNA(Sec) from L-serine and tRNA(Sec): step 1/1. In terms of biological role, catalyzes the attachment of serine to tRNA(Ser). Is also able to aminoacylate tRNA(Sec) with serine, to form the misacylated tRNA L-seryl-tRNA(Sec), which will be further converted into selenocysteinyl-tRNA(Sec). The protein is Serine--tRNA ligase of Zymomonas mobilis subsp. mobilis (strain ATCC 31821 / ZM4 / CP4).